A 288-amino-acid chain; its full sequence is Ribosome biogenesis GTPase A (288 aa).

The region spanning Arg14–Pro179 is the CP-type G domain. GTP-binding positions include Asn58–Asp61, Asn131–Thr136, and Gly175.

Belongs to the TRAFAC class YlqF/YawG GTPase family. MTG1 subfamily. Interacts with ctc. Interacts with the immature 50S ribosome subunit. 2 molecules of rbgA bind to one 50S subunit.

The protein resides in the cytoplasm. In terms of biological role, essential protein that is required for a late step of 50S ribosomal subunit assembly. Has GTPase activity that is stimulated by interaction with the immature 50S ribosome subunit. Binds to the 23S rRNA. Required for the association of ribosomal proteins rplP and rpmA with the large subunit. This Priestia megaterium (strain DSM 319 / IMG 1521) (Bacillus megaterium) protein is Ribosome biogenesis GTPase A.